A 346-amino-acid chain; its full sequence is tRNA N6-adenosine threonylcarbamoyltransferase (346 aa).

Fe cation-binding residues include histidine 110 and histidine 114. Substrate contacts are provided by residues 132–136 (LLSGG), aspartate 165, glycine 178, and asparagine 274. Aspartate 298 serves as a coordination point for Fe cation.

Belongs to the KAE1 / TsaD family. The cofactor is Fe(2+).

It localises to the cytoplasm. The enzyme catalyses L-threonylcarbamoyladenylate + adenosine(37) in tRNA = N(6)-L-threonylcarbamoyladenosine(37) in tRNA + AMP + H(+). In terms of biological role, required for the formation of a threonylcarbamoyl group on adenosine at position 37 (t(6)A37) in tRNAs that read codons beginning with adenine. Is involved in the transfer of the threonylcarbamoyl moiety of threonylcarbamoyl-AMP (TC-AMP) to the N6 group of A37, together with TsaE and TsaB. TsaD likely plays a direct catalytic role in this reaction. This chain is tRNA N6-adenosine threonylcarbamoyltransferase, found in Borreliella burgdorferi (strain ZS7) (Borrelia burgdorferi).